A 333-amino-acid polypeptide reads, in one-letter code: Glyceraldehyde-3-phosphate dehydrogenase (333 aa).

Residues 12-13 (RI), D36, R80, and S120 each bind NAD(+). Residues 150-152 (SCT), T181, R196, 209-210 (TG), and R232 contribute to the D-glyceraldehyde 3-phosphate site. C151 serves as the catalytic Nucleophile. N314 contacts NAD(+).

The protein belongs to the glyceraldehyde-3-phosphate dehydrogenase family. In terms of assembly, homotetramer.

The protein resides in the cytoplasm. It catalyses the reaction D-glyceraldehyde 3-phosphate + phosphate + NAD(+) = (2R)-3-phospho-glyceroyl phosphate + NADH + H(+). It participates in carbohydrate degradation; glycolysis; pyruvate from D-glyceraldehyde 3-phosphate: step 1/5. Its function is as follows. Catalyzes the oxidative phosphorylation of glyceraldehyde 3-phosphate (G3P) to 1,3-bisphosphoglycerate (BPG) using the cofactor NAD. The first reaction step involves the formation of a hemiacetal intermediate between G3P and a cysteine residue, and this hemiacetal intermediate is then oxidized to a thioester, with concomitant reduction of NAD to NADH. The reduced NADH is then exchanged with the second NAD, and the thioester is attacked by a nucleophilic inorganic phosphate to produce BPG. In Cereibacter sphaeroides (Rhodobacter sphaeroides), this protein is Glyceraldehyde-3-phosphate dehydrogenase (gapB).